A 60-amino-acid chain; its full sequence is UPF0434 protein YcaR (60 aa).

Belongs to the UPF0434 family.

The protein is UPF0434 protein YcaR of Salmonella arizonae (strain ATCC BAA-731 / CDC346-86 / RSK2980).